The following is a 599-amino-acid chain: Beta-(1--&gt;2)glucan export ATP-binding/permease protein NdvA (599 aa).

An ABC transmembrane type-1 domain is found at 21–301 (TITMCVASVL…ISAFINQTVT (281 aa)). 5 helical membrane-spanning segments follow: residues 22–42 (ITMC…PVLF), 55–75 (IFSP…AAVF), 156–176 (MRMS…GQLV), 248–268 (MAST…VTKG), and 276–296 (IAFI…SAFI). The ABC transporter domain occupies 335 to 569 (IVFDNVTYEF…GGRFSDLLRA (235 aa)). ATP is bound at residue 368-375 (GPTGAGKT).

Belongs to the ABC transporter superfamily. Beta-(1--&gt;2)glucan exporter (TC 3.A.1.108.1) family. In terms of assembly, homodimer.

Its subcellular location is the cell inner membrane. It catalyses the reaction [(1-&gt;2)-beta-D-glucosyl](n)(in) + ATP + H2O = [(1-&gt;2)-beta-D-glucosyl](n)(out) + ADP + phosphate + H(+). In terms of biological role, involved in beta-(1--&gt;2)glucan export. Transmembrane domains (TMD) form a pore in the inner membrane and the ATP-binding domain (NBD) is responsible for energy generation. The polypeptide is Beta-(1--&gt;2)glucan export ATP-binding/permease protein NdvA (Brucella melitensis biotype 1 (strain ATCC 23456 / CCUG 17765 / NCTC 10094 / 16M)).